The chain runs to 311 residues: Dof zinc finger protein DOF1.4 (311 aa).

Over residues 1-12 (MQSKNMIVASSH) the composition is skewed to polar residues. Residues 1–29 (MQSKNMIVASSHQQQQQQQPQQPQPQLKC) are disordered. Residues 13–26 (QQQQQQQPQQPQPQ) are compositionally biased toward low complexity. The segment at 27 to 81 (LKCPRCDSSNTKFCYYNNYSLSQPRHFCKACKRYWTRGGTLRNVPVGGSYRKNKR) adopts a Dof-type zinc-finger fold. 4 residues coordinate Zn(2+): Cys-29, Cys-32, Cys-54, and Cys-57. A disordered region spans residues 72 to 110 (VGGSYRKNKRVKRPSTATTTTASTVSTTNSSSPNNPHQI). The span at 85 to 107 (PSTATTTTASTVSTTNSSSPNNP) shows a compositional bias: low complexity.

It is found in the nucleus. Functionally, transcription factor that binds specifically to a 5'-AA[AG]G-3' consensus core sequence. The chain is Dof zinc finger protein DOF1.4 (DOF1.4) from Arabidopsis thaliana (Mouse-ear cress).